A 327-amino-acid chain; its full sequence is Phenylalanine--tRNA ligase alpha subunit (327 aa).

A Mg(2+)-binding site is contributed by E252.

The protein belongs to the class-II aminoacyl-tRNA synthetase family. Phe-tRNA synthetase alpha subunit type 1 subfamily. As to quaternary structure, tetramer of two alpha and two beta subunits. Mg(2+) serves as cofactor.

The protein localises to the cytoplasm. The catalysed reaction is tRNA(Phe) + L-phenylalanine + ATP = L-phenylalanyl-tRNA(Phe) + AMP + diphosphate + H(+). This Pectobacterium atrosepticum (strain SCRI 1043 / ATCC BAA-672) (Erwinia carotovora subsp. atroseptica) protein is Phenylalanine--tRNA ligase alpha subunit.